A 174-amino-acid chain; its full sequence is Methylated-DNA--protein-cysteine methyltransferase (174 aa).

The active-site Nucleophile; methyl group acceptor is the Cys-141.

This sequence belongs to the MGMT family.

It localises to the cytoplasm. The enzyme catalyses a 6-O-methyl-2'-deoxyguanosine in DNA + L-cysteinyl-[protein] = S-methyl-L-cysteinyl-[protein] + a 2'-deoxyguanosine in DNA. It carries out the reaction a 4-O-methyl-thymidine in DNA + L-cysteinyl-[protein] = a thymidine in DNA + S-methyl-L-cysteinyl-[protein]. Involved in the cellular defense against the biological effects of O6-methylguanine (O6-MeG) and O4-methylthymine (O4-MeT) in DNA. Repairs the methylated nucleobase in DNA by stoichiometrically transferring the methyl group to a cysteine residue in the enzyme. This is a suicide reaction: the enzyme is irreversibly inactivated. This Thermococcus kodakarensis (strain ATCC BAA-918 / JCM 12380 / KOD1) (Pyrococcus kodakaraensis (strain KOD1)) protein is Methylated-DNA--protein-cysteine methyltransferase.